We begin with the raw amino-acid sequence, 347 residues long: Spermidine/putrescine import ATP-binding protein PotA (347 aa).

In terms of domain architecture, ABC transporter spans 6–238 (LEIRNLSHYY…PKTKFVADFI (233 aa)). 40–47 (GPSGCGKT) provides a ligand contact to ATP.

It belongs to the ABC transporter superfamily. Spermidine/putrescine importer (TC 3.A.1.11.1) family. In terms of assembly, the complex is composed of two ATP-binding proteins (PotA), two transmembrane proteins (PotB and PotC) and a solute-binding protein (PotD).

It is found in the cell inner membrane. The enzyme catalyses ATP + H2O + polyamine-[polyamine-binding protein]Side 1 = ADP + phosphate + polyamineSide 2 + [polyamine-binding protein]Side 1.. Its function is as follows. Part of the ABC transporter complex PotABCD involved in spermidine/putrescine import. Responsible for energy coupling to the transport system. This is Spermidine/putrescine import ATP-binding protein PotA from Borrelia garinii subsp. bavariensis (strain ATCC BAA-2496 / DSM 23469 / PBi) (Borreliella bavariensis).